We begin with the raw amino-acid sequence, 367 residues long: Tetraacyldisaccharide 4'-kinase (367 aa).

68–75 (VLGGSGKT) contacts ATP.

Belongs to the LpxK family.

The enzyme catalyses a lipid A disaccharide + ATP = a lipid IVA + ADP + H(+). Its pathway is glycolipid biosynthesis; lipid IV(A) biosynthesis; lipid IV(A) from (3R)-3-hydroxytetradecanoyl-[acyl-carrier-protein] and UDP-N-acetyl-alpha-D-glucosamine: step 6/6. Transfers the gamma-phosphate of ATP to the 4'-position of a tetraacyldisaccharide 1-phosphate intermediate (termed DS-1-P) to form tetraacyldisaccharide 1,4'-bis-phosphate (lipid IVA). This Chlamydia abortus (strain DSM 27085 / S26/3) (Chlamydophila abortus) protein is Tetraacyldisaccharide 4'-kinase.